The chain runs to 512 residues: Beta-glucosidase 44 (512 aa).

The signal sequence occupies residues 1–23 (MRHLSSPPWPLLLLLLLSSFTSG). Gln58 serves as a coordination point for a beta-D-glucoside. Asn86 carries an N-linked (GlcNAc...) asparagine glycan. A beta-D-glucoside-binding positions include His159 and 204–205 (NE). Glu205 acts as the Proton donor in catalysis. Cys224 and Cys231 are joined by a disulfide. N-linked (GlcNAc...) asparagine glycosylation is present at Asn230. A beta-D-glucoside is bound by residues Tyr347 and Glu419. The Nucleophile role is filled by Glu419. Asn427 carries N-linked (GlcNAc...) asparagine glycosylation. A beta-D-glucoside-binding positions include Trp466, 473-474 (EW), and Phe482.

This sequence belongs to the glycosyl hydrolase 1 family. As to quaternary structure, homodimer.

The protein resides in the secreted. It carries out the reaction Hydrolysis of terminal, non-reducing beta-D-glucosyl residues with release of beta-D-glucose.. Functionally, hydrolyzes p-nitrophenyl beta-D-glucoside, p-nitrophenyl beta-D-mannoside, cellobiose, 4-methylumbelliferyl-beta-D-glucoside, laminarin, amygdalin, esculin and gentiobiose. In Arabidopsis thaliana (Mouse-ear cress), this protein is Beta-glucosidase 44.